Consider the following 416-residue polypeptide: MSDEQKKPEQIHRRDILKWGAMAGAAVAIGASGLGGLAPLVQTAAKPSKKDEKEEEQIVPFYGKHQAGITTAHQTYVYFAALDVTAKDKSDIITLFRNWTSLTQMLTSGKKMSAEQRNQYLPPQDTGESADLSPSNLTVTFGFGPGFFEKDGKDRFGLKSKKPKHLAALPAMPNDNLDEKQGGGDICIQVCADDEQVAFHALRNLLNQAVGTCEVRFVNKGFLSGGKNGETPRNLFGFKDGTGNQSTKDDTLMNSIVWIQSGEPDWMTGGTYMAFRKIKMFLEVWDRSSLKDQEDTFGRRKSSGAPFGQKKETDPVKLNQIPSNSHVSLAKSTGKQILRRAFSYTEGLDPKTGYMDAGLLFISFQKNPDNQFIPMLKALSAKDALNEYTQTIGSALYACPGGCKKGEYIAQRLLES.

A signal peptide (tat-type signal) is located at residues 1-28 (MSDEQKKPEQIHRRDILKWGAMAGAAVA). Position 241–243 (241–243 (GTG)) interacts with heme b. The disordered stretch occupies residues 293–318 (QEDTFGRRKSSGAPFGQKKETDPVKL). Residues His326 and Arg339 each coordinate heme b.

It belongs to the DyP-type peroxidase family. In terms of assembly, component of the iron transporter efeUOB/M complex composed of EfeU, EfeM and EfeB; EfeU is essential for the complex formation. It depends on heme b as a cofactor. In terms of processing, exported by the Tat system. The position of the signal peptide cleavage has not been experimentally proven.

The protein localises to the secreted. Its subcellular location is the cell membrane. It carries out the reaction heme b + 2 H(+) = protoporphyrin IX + Fe(2+). The enzyme catalyses 2 Fe(2+) + H2O2 + 2 H(+) = 2 Fe(3+) + 2 H2O. In terms of biological role, involved in the recovery of exogenous heme iron. Extracts iron from heme while preserving the protoporphyrin ring intact. Part of the iron transporter system efeUOB/M involved in iron import. Catalyzes the peroxide-mediated oxidation of Fe(2+) into Fe(3+); EfeM binds Fe(3+) and delivers it to the cell membrane permease EfeU. The chain is Deferrochelatase from Bacillus subtilis (strain 168).